A 96-amino-acid chain; its full sequence is (4S)-4-hydroxy-5-phosphonooxypentane-2,3-dione isomerase (96 aa).

In terms of domain architecture, ABM spans 2-91 (HVTLVEINVH…MTGPRKKRLF (90 aa)).

This sequence belongs to the LsrG family. As to quaternary structure, homodimer.

It localises to the cytoplasm. It carries out the reaction (2S)-2-hydroxy-3,4-dioxopentyl phosphate = 3-hydroxy-2,4-dioxopentyl phosphate. Functionally, involved in the degradation of phospho-AI-2, thereby terminating induction of the lsr operon and closing the AI-2 signaling cycle. Catalyzes the conversion of (4S)-4-hydroxy-5-phosphonooxypentane-2,3-dione (P-DPD) to 3-hydroxy-5-phosphonooxypentane-2,4-dione (P-HPD). This chain is (4S)-4-hydroxy-5-phosphonooxypentane-2,3-dione isomerase, found in Shigella flexneri serotype 5b (strain 8401).